The primary structure comprises 127 residues: Aspartate 1-decarboxylase (127 aa).

Catalysis depends on S25, which acts as the Schiff-base intermediate with substrate; via pyruvic acid. The residue at position 25 (S25) is a Pyruvic acid (Ser). T57 is a binding site for substrate. Y58 (proton donor) is an active-site residue. 73–75 (GAA) contributes to the substrate binding site.

This sequence belongs to the PanD family. As to quaternary structure, heterooctamer of four alpha and four beta subunits. The cofactor is pyruvate. Post-translationally, is synthesized initially as an inactive proenzyme, which is activated by self-cleavage at a specific serine bond to produce a beta-subunit with a hydroxyl group at its C-terminus and an alpha-subunit with a pyruvoyl group at its N-terminus.

It is found in the cytoplasm. It catalyses the reaction L-aspartate + H(+) = beta-alanine + CO2. Its pathway is cofactor biosynthesis; (R)-pantothenate biosynthesis; beta-alanine from L-aspartate: step 1/1. Catalyzes the pyruvoyl-dependent decarboxylation of aspartate to produce beta-alanine. This chain is Aspartate 1-decarboxylase, found in Listeria monocytogenes serovar 1/2a (strain ATCC BAA-679 / EGD-e).